The sequence spans 87 residues: U24 protein (87 aa).

Phosphothreonine is present on threonine 6. The PPXY motif signature appears at proline 8–tyrosine 11. The helical transmembrane segment at phenylalanine 59 to valine 79 threads the bilayer.

As to quaternary structure, interacts with host ITCH; this interaction probably mediates ITCH degradation. Interacts probably with NEDD4.

The protein resides in the membrane. Its function is as follows. Down-regulates the TCR/CD3E complex and the transferrin receptor TFRC in host T-cells by blocking them from recycling back to the cell surface. The sequence is that of U24 protein (U24) from Homo sapiens (Human).